Consider the following 491-residue polypeptide: Cysteine--tRNA ligase (491 aa).

Cys-29 provides a ligand contact to Zn(2+). A 'HIGH' region motif is present at residues 31 to 41; sequence PTVYDFAHIGN. Residues Cys-227, His-252, and Glu-256 each coordinate Zn(2+). A 'KMSKS' region motif is present at residues 285 to 289; it reads KMSKS. Lys-288 is a binding site for ATP.

It belongs to the class-I aminoacyl-tRNA synthetase family. Monomer. It depends on Zn(2+) as a cofactor.

The protein resides in the cytoplasm. The catalysed reaction is tRNA(Cys) + L-cysteine + ATP = L-cysteinyl-tRNA(Cys) + AMP + diphosphate. This chain is Cysteine--tRNA ligase, found in Rhodopseudomonas palustris (strain TIE-1).